The chain runs to 281 residues: MRHTLPHAPQFYVTAPQPCPYLHGRAERKLFTALAGDSANELNNALSRQGFRRSQNVLYRPSCESCVACMSARIRVSEFEPSRTQRRIARRNAHLRRLATSAWATEEQYELFRAYLDERHADGGMADMDIFEFAAMIEETPVRTRVIEYRAHQGDSSEIPPPPDSDQLVAVCLTDVLDDGLSLVYSFYDPALEGFSLGTHIILDHIDLARSAGLPFVYLGYWVPGSRKMDYKAKFSALEIYKGGVWQPIGDPAQHTSDIHPLSIDPIVEQVARINLPSNRR.

Belongs to the R-transferase family. Bpt subfamily.

The protein resides in the cytoplasm. The enzyme catalyses N-terminal L-glutamyl-[protein] + L-leucyl-tRNA(Leu) = N-terminal L-leucyl-L-glutamyl-[protein] + tRNA(Leu) + H(+). It carries out the reaction N-terminal L-aspartyl-[protein] + L-leucyl-tRNA(Leu) = N-terminal L-leucyl-L-aspartyl-[protein] + tRNA(Leu) + H(+). Functionally, functions in the N-end rule pathway of protein degradation where it conjugates Leu from its aminoacyl-tRNA to the N-termini of proteins containing an N-terminal aspartate or glutamate. The polypeptide is Aspartate/glutamate leucyltransferase (Paracoccus denitrificans (strain Pd 1222)).